A 310-amino-acid chain; its full sequence is tRNA uridine(34) hydroxylase (310 aa).

Residues 124–218 (SDPEVLLIDT…YFEEVPQEES (95 aa)) enclose the Rhodanese domain. The active-site Cysteine persulfide intermediate is the Cys178.

The protein belongs to the TrhO family.

It carries out the reaction uridine(34) in tRNA + AH2 + O2 = 5-hydroxyuridine(34) in tRNA + A + H2O. Its function is as follows. Catalyzes oxygen-dependent 5-hydroxyuridine (ho5U) modification at position 34 in tRNAs. This chain is tRNA uridine(34) hydroxylase, found in Pseudomonas putida (strain W619).